Consider the following 490-residue polypeptide: Ribulose bisphosphate carboxylase large chain (490 aa).

Positions 127 and 177 each coordinate substrate. Residue K179 is the Proton acceptor of the active site. K181 provides a ligand contact to substrate. 3 residues coordinate Mg(2+): K205, D207, and E208. K205 is subject to N6-carboxylysine. Residue H297 is the Proton acceptor of the active site. Positions 298, 330, and 382 each coordinate substrate.

The protein belongs to the RuBisCO large chain family. Type I subfamily. As to quaternary structure, heterohexadecamer of 8 large chains and 8 small chains. The cofactor is Mg(2+).

The protein resides in the plastid. The protein localises to the chloroplast. It catalyses the reaction 2 (2R)-3-phosphoglycerate + 2 H(+) = D-ribulose 1,5-bisphosphate + CO2 + H2O. It carries out the reaction D-ribulose 1,5-bisphosphate + O2 = 2-phosphoglycolate + (2R)-3-phosphoglycerate + 2 H(+). Its function is as follows. RuBisCO catalyzes two reactions: the carboxylation of D-ribulose 1,5-bisphosphate, the primary event in carbon dioxide fixation, as well as the oxidative fragmentation of the pentose substrate in the photorespiration process. Both reactions occur simultaneously and in competition at the same active site. In Phaeodactylum tricornutum (strain CCAP 1055/1), this protein is Ribulose bisphosphate carboxylase large chain.